The sequence spans 1537 residues: DNA excision repair protein ERCC-6-like 2 (1537 aa).

One can recognise a Helicase ATP-binding domain in the interval 134–319 (YRHYIEGRGC…WCVMDWAVPG (186 aa)). 147–154 (DDMGLGKT) lines the ATP pocket. The DEAH box motif lies at 270-273 (DEAH). The 151-residue stretch at 510–660 (VLQQLLNHFR…CVVVGSENAK (151 aa)) folds into the Helicase C-terminal domain. Disordered regions lie at residues 715–735 (KGEP…QEPT) and 749–768 (SVGH…TSRT). Residues 755–764 (GKTDKHKFSD) are compositionally biased toward basic and acidic residues. The Atypical PIP-box motif lies at 772-783 (PAQLTLLQCGFS). 3 disordered regions span residues 791–811 (KSDQ…DEQP), 833–891 (SEHQ…EDSD), and 918–948 (EDSE…PNLL). Residues 834 to 857 (EHQKSDNIQTPDEKCVSDKSEKTL) are compositionally biased toward basic and acidic residues. Residues serine 968 and serine 971 each carry the phosphoserine modification. Residues 1274–1306 (VHKKEERVRNKSKEKESLLKENPSNDSTLSCYD) form a disordered region. The segment covering 1276 to 1292 (KKEERVRNKSKEKESLL) has biased composition (basic and acidic residues). Positions 1295–1306 (NPSNDSTLSCYD) are enriched in polar residues.

The protein belongs to the SNF2/RAD54 helicase family. As to quaternary structure, interacts with NEK6. Interacts (via an atypical PIP-box) with PCNA; this interaction facilitates cenrtomeric localization of ERCC6L2. Interacts with CYREN; this interaction is DNA independent. Interacts with XRCC6 and XRCC5. In terms of processing, phosphorylated by NEK6.

Its subcellular location is the nucleus. It localises to the cytoplasm. The protein resides in the cytoskeleton. It is found in the microtubule organizing center. The protein localises to the centrosome. Its subcellular location is the mitochondrion. It localises to the chromosome. The protein resides in the centromere. Promotes double-strand break (DSB) end-joining and facilitates programmed recombination by controlling how DNA ends are joined in a spatially oriented manner during repair. Also plays a role in DNA repair by restricting DNA end resection in double strand break (DSB) repair. Facilitates replication of complex DNA regions and regulates the maintenance of chromatin structure. The sequence is that of DNA excision repair protein ERCC-6-like 2 from Mus musculus (Mouse).